A 619-amino-acid polypeptide reads, in one-letter code: N-acetylmuramoyl-L-alanine amidase domain-containing protein SAOUHSC_02979 (619 aa).

The first 27 residues, 1–27 (MPKNKILIYLLSTTLVLPTLVSPTAYA), serve as a signal peptide directing secretion. Disordered regions lie at residues 25–83 (AYAD…TIDD), 134–226 (SDYE…SMSD), and 238–290 (EDAK…NQKD). 3 stretches are compositionally biased toward basic and acidic residues: residues 30–65 (PQKD…KADK), 73–82 (NNDKKFKTID), and 137–146 (EQPRNGEKST). Residues 147–156 (NDSNKNSDNS) show a composition bias toward low complexity. Positions 157–175 (IKNDTDTQSSKQDKADNQK) are enriched in basic and acidic residues. Positions 176–192 (APKSNNTKPSTSNKQPN) are enriched in polar residues. Residues 214–226 (QKSSSKDNQSMSD) show a composition bias toward low complexity. A compositionally biased stretch (basic and acidic residues) spans 238-260 (EDAKKTQKDYASQSKKDKNEKSN). Positions 327-468 (IAKDAHRIGQ…LNSIIKHYQL (142 aa)) are N-acetylmuramoyl-L-alanine amidase. A Peptidase C51 domain is found at 488–617 (DYDDSSDEFK…AAAEELSYIT (130 aa)).

This sequence in the N-terminal section; belongs to the N-acetylmuramoyl-L-alanine amidase 2 family.

It localises to the secreted. This chain is N-acetylmuramoyl-L-alanine amidase domain-containing protein SAOUHSC_02979, found in Staphylococcus aureus (strain NCTC 8325 / PS 47).